A 1077-amino-acid polypeptide reads, in one-letter code: Error-prone DNA polymerase (1077 aa).

It belongs to the DNA polymerase type-C family. DnaE2 subfamily.

It localises to the cytoplasm. It catalyses the reaction DNA(n) + a 2'-deoxyribonucleoside 5'-triphosphate = DNA(n+1) + diphosphate. Functionally, DNA polymerase involved in damage-induced mutagenesis and translesion synthesis (TLS). It is not the major replicative DNA polymerase. In Brucella melitensis biotype 1 (strain ATCC 23456 / CCUG 17765 / NCTC 10094 / 16M), this protein is Error-prone DNA polymerase.